Here is a 319-residue protein sequence, read N- to C-terminus: HPr kinase/phosphorylase (319 aa).

Active-site residues include H140 and K161. 155–162 (GDSGVGKS) contributes to the ATP binding site. S162 serves as a coordination point for Mg(2+). Catalysis depends on D179, which acts as the Proton acceptor; for phosphorylation activity. Proton donor; for dephosphorylation activity. The interval 203–212 (LEIRGLGIID) is important for the catalytic mechanism of both phosphorylation and dephosphorylation. E204 contacts Mg(2+). R245 is a catalytic residue. The tract at residues 266-271 (PVKVGR) is important for the catalytic mechanism of dephosphorylation.

This sequence belongs to the HPrK/P family. As to quaternary structure, homohexamer, arranged as bilayered trimers. Six HPr molecules bind to the hexamer at sites that overlap two of its subunits. Mg(2+) is required as a cofactor.

It carries out the reaction [HPr protein]-L-serine + ATP = [HPr protein]-O-phospho-L-serine + ADP + H(+). The catalysed reaction is [HPr protein]-O-phospho-L-serine + phosphate + H(+) = [HPr protein]-L-serine + diphosphate. Kinase activity is slightly activated by fructose 1,6-bisphosphate (FBP), and inhibited by inorganic phosphate (Pi), but FBP prevents kinase inhibition by Pi. Dephosphorylation of P-Ser-HPr is slightly inhibited by FBP. In terms of biological role, catalyzes the ATP- as well as the pyrophosphate-dependent phosphorylation of 'Ser-46' in HPr, a phosphocarrier protein of the phosphoenolpyruvate-dependent sugar phosphotransferase system (PTS). HprK/P also catalyzes the pyrophosphate-producing, inorganic phosphate-dependent dephosphorylation (phosphorolysis) of seryl-phosphorylated HPr (P-Ser-HPr). The two antagonistic activities of HprK/P are regulated by several intracellular metabolites, which change their concentration in response to the absence or presence of rapidly metabolisable carbon sources (glucose, fructose, etc.) in the growth medium. Therefore, by controlling the phosphorylation state of HPr, HPrK/P is a sensor enzyme that plays a major role in the regulation of carbon metabolism and sugar transport: it mediates carbon catabolite repression (CCR), and regulates PTS-catalyzed carbohydrate uptake and inducer exclusion. The protein is HPr kinase/phosphorylase (hprK) of Lacticaseibacillus casei (Lactobacillus casei).